Consider the following 131-residue polypeptide: Small ribosomal subunit protein eS24 (131 aa).

The interval 93-131 (RHGLYEKKKTSRKQRKERKNRMKKVRGTKKASVGAAGKK) is disordered. Residues 101-121 (KTSRKQRKERKNRMKKVRGTK) are compositionally biased toward basic residues.

It belongs to the eukaryotic ribosomal protein eS24 family. Component of the small ribosomal subunit. Part of the small subunit (SSU) processome, composed of more than 70 proteins and the RNA chaperone small nucleolar RNA (snoRNA) U3.

Its subcellular location is the cytoplasm. It is found in the nucleus. The protein resides in the nucleolus. In terms of biological role, component of the small ribosomal subunit. The ribosome is a large ribonucleoprotein complex responsible for the synthesis of proteins in the cell. Required for processing of pre-rRNA and maturation of 40S ribosomal subunits. Part of the small subunit (SSU) processome, first precursor of the small eukaryotic ribosomal subunit. During the assembly of the SSU processome in the nucleolus, many ribosome biogenesis factors, an RNA chaperone and ribosomal proteins associate with the nascent pre-rRNA and work in concert to generate RNA folding, modifications, rearrangements and cleavage as well as targeted degradation of pre-ribosomal RNA by the RNA exosome. The polypeptide is Small ribosomal subunit protein eS24 (rps24) (Ictalurus punctatus (Channel catfish)).